Here is a 159-residue protein sequence, read N- to C-terminus: Ribosomal RNA large subunit methyltransferase H (159 aa).

Residues Leu-76, Gly-108, and 127–132 contribute to the S-adenosyl-L-methionine site; that span reads FSHMTF.

The protein belongs to the RNA methyltransferase RlmH family. Homodimer.

The protein resides in the cytoplasm. It catalyses the reaction pseudouridine(1915) in 23S rRNA + S-adenosyl-L-methionine = N(3)-methylpseudouridine(1915) in 23S rRNA + S-adenosyl-L-homocysteine + H(+). Specifically methylates the pseudouridine at position 1915 (m3Psi1915) in 23S rRNA. The protein is Ribosomal RNA large subunit methyltransferase H of Halothermothrix orenii (strain H 168 / OCM 544 / DSM 9562).